Reading from the N-terminus, the 399-residue chain is Cytochrome P450 FAS1 (399 aa).

Heme is bound at residue Cys-349.

It belongs to the cytochrome P450 family. It depends on heme as a cofactor.

It localises to the cytoplasm. Functionally, may be involved in the biosynthesis of cytokinin phytohormones and in host plant fasciation (leafy gall). The sequence is that of Cytochrome P450 FAS1 (fas1) from Rhodococcoides fascians (Rhodococcus fascians).